A 120-amino-acid polypeptide reads, in one-letter code: Late histone H2A.2.2 (120 aa).

Residues Met1 to Ser18 are compositionally biased toward basic residues. The tract at residues Met1 to Gly22 is disordered. An N-acetylserine modification is found at Ser2. At Ser2 the chain carries Phosphoserine. The residue at position 104 (Gln104) is an N5-methylglutamine. A Glycyl lysine isopeptide (Lys-Gly) (interchain with G-Cter in ubiquitin) cross-link involves residue Lys119.

The protein belongs to the histone H2A family. In terms of assembly, the nucleosome is a histone octamer containing two molecules each of H2A, H2B, H3 and H4 assembled in one H3-H4 heterotetramer and two H2A-H2B heterodimers. The octamer wraps approximately 147 bp of DNA. Monoubiquitination of Lys-119 gives a specific tag for epigenetic transcriptional repression. In terms of processing, phosphorylation of Ser-2 directly represses transcription.

It is found in the nucleus. Its subcellular location is the chromosome. Core component of nucleosome. Nucleosomes wrap and compact DNA into chromatin, limiting DNA accessibility to the cellular machineries which require DNA as a template. Histones thereby play a central role in transcription regulation, DNA repair, DNA replication and chromosomal stability. DNA accessibility is regulated via a complex set of post-translational modifications of histones, also called histone code, and nucleosome remodeling. This Psammechinus miliaris (Green sea urchin) protein is Late histone H2A.2.2.